Reading from the N-terminus, the 80-residue chain is Pancreatic polypeptide (80 aa).

The N-terminal stretch at 1-25 is a signal peptide; it reads MPPRWASLLLLACSLLLLAVPPGTA. A Tyrosine amide modification is found at Tyr61. The propeptide occupies 65-80; sequence SSSRVLCEEPMGAAGC.

The protein belongs to the NPY family.

It localises to the secreted. Functionally, hormone secreted by pancreatic cells that acts as a regulator of pancreatic and gastrointestinal functions. The protein is Pancreatic polypeptide (PPY) of Gallus gallus (Chicken).